The sequence spans 91 residues: Long neurotoxin OH-56 (91 aa).

The signal sequence occupies residues methionine 1–threonine 21. Disulfide bonds link cysteine 24/cysteine 42, cysteine 35/cysteine 63, cysteine 48/cysteine 52, cysteine 67/cysteine 78, and cysteine 79/cysteine 84.

The protein belongs to the three-finger toxin family. Long-chain subfamily. Type II alpha-neurotoxin sub-subfamily. In terms of tissue distribution, expressed by the venom gland.

It localises to the secreted. Functionally, binds with high affinity to muscular (alpha-1/CHRNA1) and neuronal (alpha-7/CHRNA7) nicotinic acetylcholine receptor (nAChR) and inhibits acetylcholine from binding to the receptor, thereby impairing neuromuscular and neuronal transmission. This chain is Long neurotoxin OH-56, found in Ophiophagus hannah (King cobra).